The sequence spans 412 residues: Probable serine/threonine-protein kinase PBL10 (412 aa).

The N-myristoyl glycine moiety is linked to residue Gly-2. Cys-4 carries S-palmitoyl cysteine lipidation. Residues 15 to 45 (GASPKYMSSEANDSLGSKSSSVSIRTNPRTE) are disordered. Polar residues predominate over residues 23–43 (SEANDSLGSKSSSVSIRTNPR). Thr-58 bears the Phosphothreonine mark. One can recognise a Protein kinase domain in the interval 69 to 356 (FRPDSVLGEG…VVSHLEHIQT (288 aa)). ATP is bound by residues 75–83 (LGEGGFGSV) and Lys-107. The residue at position 152 (Tyr-152) is a Phosphotyrosine. Asp-204 (proton acceptor) is an active-site residue. A phosphoserine mark is found at Ser-208 and Ser-238. Phosphothreonine is present on residues Thr-239 and Thr-244. Phosphotyrosine is present on Tyr-252.

It belongs to the protein kinase superfamily. Ser/Thr protein kinase family. Interacts with the Xanthomonas campestris effector XopAC/AvrAC. In terms of tissue distribution, expressed in stomatal guard cells of leaves.

It localises to the cell membrane. The enzyme catalyses L-seryl-[protein] + ATP = O-phospho-L-seryl-[protein] + ADP + H(+). The catalysed reaction is L-threonyl-[protein] + ATP = O-phospho-L-threonyl-[protein] + ADP + H(+). Functionally, possible bi-functional kinase. In vitro, it exhibits serine/threonine activity. In vivo, can phosphorylate tyrosine residues of limited substrates. May be involved in plant defense signaling. Required for full light-induced stomatal opening. This is Probable serine/threonine-protein kinase PBL10 from Arabidopsis thaliana (Mouse-ear cress).